The sequence spans 268 residues: Cytochrome b-c1 complex subunit Rieske-5, mitochondrial (268 aa).

Residues 1 to 56 constitute a mitochondrion transit peptide; the sequence is MLRIAGRKLSSSAAARSSSAFFTRNPFTFTDDSSSPTRSPSPTSLASQFLDQFRGF. The Mitochondrial matrix segment spans residues 57 to 105; it reads SSNSVSPAHQTGLVSDLPATVAAIKNPSSKIVYDDSNHERYPPGDPSKR. A helical membrane pass occupies residues 106 to 128; it reads AFAYFVLTGGRFVYASLVRLLIL. The Mitochondrial intermembrane segment spans residues 129–268; that stretch reads KFVLSMSASK…FMEENKLLIG (140 aa). In terms of domain architecture, Rieske spans 178–266; that stretch reads INLANSVDLG…YSFMEENKLL (89 aa). Positions 211, 213, 230, and 233 each coordinate [2Fe-2S] cluster. A disulfide bond links Cys-216 and Cys-232.

This sequence belongs to the Rieske iron-sulfur protein family. In terms of assembly, component of the ubiquinol-cytochrome c oxidoreductase (cytochrome b-c1 complex, complex III, CIII), a multisubunit enzyme composed of 3 respiratory subunits cytochrome b, cytochrome c1 and Rieske protein, 2 core protein subunits, and several low-molecular weight protein subunits. The complex exists as an obligatory dimer and forms supercomplexes (SCs) in the inner mitochondrial membrane with cytochrome c oxidase (complex IV, CIV). Requires [2Fe-2S] cluster as cofactor. As to expression, high levels are seen in the flowers while a low level expression is seen in the roots, leaves and stems.

Its subcellular location is the mitochondrion inner membrane. The catalysed reaction is a quinol + 2 Fe(III)-[cytochrome c](out) = a quinone + 2 Fe(II)-[cytochrome c](out) + 2 H(+)(out). In terms of biological role, component of the ubiquinol-cytochrome c oxidoreductase, a multisubunit transmembrane complex that is part of the mitochondrial electron transport chain which drives oxidative phosphorylation. The respiratory chain contains 3 multisubunit complexes succinate dehydrogenase (complex II, CII), ubiquinol-cytochrome c oxidoreductase (cytochrome b-c1 complex, complex III, CIII) and cytochrome c oxidase (complex IV, CIV), that cooperate to transfer electrons derived from NADH and succinate to molecular oxygen, creating an electrochemical gradient over the inner membrane that drives transmembrane transport and the ATP synthase. The cytochrome b-c1 complex catalyzes electron transfer from ubiquinol to cytochrome c, linking this redox reaction to translocation of protons across the mitochondrial inner membrane, with protons being carried across the membrane as hydrogens on the quinol. In the process called Q cycle, 2 protons are consumed from the matrix, 4 protons are released into the intermembrane space and 2 electrons are passed to cytochrome c. The Rieske protein is a catalytic core subunit containing a [2Fe-2S] iron-sulfur cluster. It cycles between 2 conformational states during catalysis to transfer electrons from the quinol bound in the Q(0) site in cytochrome b to cytochrome c1. The chain is Cytochrome b-c1 complex subunit Rieske-5, mitochondrial from Nicotiana tabacum (Common tobacco).